The following is a 179-amino-acid chain: UPF0227 protein Ssed_2836 (179 aa).

Belongs to the UPF0227 family.

This Shewanella sediminis (strain HAW-EB3) protein is UPF0227 protein Ssed_2836.